A 218-amino-acid polypeptide reads, in one-letter code: 3-dehydroquinate dehydratase (218 aa).

Residues 29–31 and arginine 56 contribute to the 3-dehydroquinate site; that span reads EFR. The active-site Proton donor/acceptor is histidine 116. The Schiff-base intermediate with substrate role is filled by lysine 142. 3-dehydroquinate contacts are provided by arginine 180, serine 200, and glutamine 204.

Belongs to the type-I 3-dehydroquinase family. In terms of assembly, homodimer.

It carries out the reaction 3-dehydroquinate = 3-dehydroshikimate + H2O. The protein operates within metabolic intermediate biosynthesis; chorismate biosynthesis; chorismate from D-erythrose 4-phosphate and phosphoenolpyruvate: step 3/7. Its function is as follows. Involved in the third step of the chorismate pathway, which leads to the biosynthesis of aromatic amino acids. Catalyzes the cis-dehydration of 3-dehydroquinate (DHQ) and introduces the first double bond of the aromatic ring to yield 3-dehydroshikimate. The sequence is that of 3-dehydroquinate dehydratase from Methanococcus maripaludis (strain C6 / ATCC BAA-1332).